Consider the following 37-residue polypeptide: Large ribosomal subunit protein bL36c (37 aa).

Belongs to the bacterial ribosomal protein bL36 family.

The protein localises to the plastid. The protein resides in the chloroplast. The chain is Large ribosomal subunit protein bL36c (rpl36) from Cyanidium caldarium (Red alga).